The sequence spans 425 residues: Riboflavin biosynthesis protein RibBA (425 aa).

The tract at residues 1–204 (MTRLDSVERA…IADLIEWRRK (204 aa)) is DHBP synthase. Residues 28–29 (RE), Asp-33, 141–145 (RPGHT), and Glu-165 each bind D-ribulose 5-phosphate. Mg(2+) is bound at residue Glu-29. Residue His-144 participates in Mg(2+) binding. The GTP cyclohydrolase II stretch occupies residues 205–425 (HEKHIERVAE…HLPGEFGGAL (221 aa)). 259–263 (RVHSE) serves as a coordination point for GTP. Positions 264, 275, and 277 each coordinate Zn(2+). GTP-binding positions include Gln-280, 303–305 (EGR), and Thr-325. Residue Asp-337 is the Proton acceptor; for GTP cyclohydrolase activity of the active site. Arg-339 serves as the catalytic Nucleophile; for GTP cyclohydrolase activity. The GTP site is built by Thr-360 and Lys-365.

The protein in the N-terminal section; belongs to the DHBP synthase family. This sequence in the C-terminal section; belongs to the GTP cyclohydrolase II family. It depends on Mg(2+) as a cofactor. Requires Mn(2+) as cofactor. Zn(2+) is required as a cofactor.

The enzyme catalyses D-ribulose 5-phosphate = (2S)-2-hydroxy-3-oxobutyl phosphate + formate + H(+). It carries out the reaction GTP + 4 H2O = 2,5-diamino-6-hydroxy-4-(5-phosphoribosylamino)-pyrimidine + formate + 2 phosphate + 3 H(+). The protein operates within cofactor biosynthesis; riboflavin biosynthesis; 2-hydroxy-3-oxobutyl phosphate from D-ribulose 5-phosphate: step 1/1. It functions in the pathway cofactor biosynthesis; riboflavin biosynthesis; 5-amino-6-(D-ribitylamino)uracil from GTP: step 1/4. Its function is as follows. Catalyzes the conversion of D-ribulose 5-phosphate to formate and 3,4-dihydroxy-2-butanone 4-phosphate. Functionally, catalyzes the conversion of GTP to 2,5-diamino-6-ribosylamino-4(3H)-pyrimidinone 5'-phosphate (DARP), formate and pyrophosphate. The protein is Riboflavin biosynthesis protein RibBA of Mycobacterium ulcerans (strain Agy99).